The sequence spans 474 residues: tRNA-2-methylthio-N(6)-dimethylallyladenosine synthase (474 aa).

One can recognise an MTTase N-terminal domain in the interval 3 to 120; the sequence is KKLHIKTWGC…LPEMIEQVRR (118 aa). Positions 12, 49, 83, 157, 161, and 164 each coordinate [4Fe-4S] cluster. The 233-residue stretch at 143-375 folds into the Radical SAM core domain; sequence RAEGPTAFVS…QDRITQQAMR (233 aa). Positions 378-441 constitute a TRAM domain; sequence RHMMGTVQRI…TNSLRGVFIR (64 aa).

It belongs to the methylthiotransferase family. MiaB subfamily. As to quaternary structure, monomer. [4Fe-4S] cluster is required as a cofactor.

The protein localises to the cytoplasm. It carries out the reaction N(6)-dimethylallyladenosine(37) in tRNA + (sulfur carrier)-SH + AH2 + 2 S-adenosyl-L-methionine = 2-methylsulfanyl-N(6)-dimethylallyladenosine(37) in tRNA + (sulfur carrier)-H + 5'-deoxyadenosine + L-methionine + A + S-adenosyl-L-homocysteine + 2 H(+). Its function is as follows. Catalyzes the methylthiolation of N6-(dimethylallyl)adenosine (i(6)A), leading to the formation of 2-methylthio-N6-(dimethylallyl)adenosine (ms(2)i(6)A) at position 37 in tRNAs that read codons beginning with uridine. The chain is tRNA-2-methylthio-N(6)-dimethylallyladenosine synthase from Shewanella baltica (strain OS185).